The chain runs to 468 residues: 3-isopropylmalate dehydratase large subunit (468 aa).

Cys-347, Cys-408, and Cys-411 together coordinate [4Fe-4S] cluster.

The protein belongs to the aconitase/IPM isomerase family. LeuC type 1 subfamily. Heterodimer of LeuC and LeuD. The cofactor is [4Fe-4S] cluster.

The catalysed reaction is (2R,3S)-3-isopropylmalate = (2S)-2-isopropylmalate. The protein operates within amino-acid biosynthesis; L-leucine biosynthesis; L-leucine from 3-methyl-2-oxobutanoate: step 2/4. Its function is as follows. Catalyzes the isomerization between 2-isopropylmalate and 3-isopropylmalate, via the formation of 2-isopropylmaleate. The sequence is that of 3-isopropylmalate dehydratase large subunit from Methylobacillus flagellatus (strain ATCC 51484 / DSM 6875 / VKM B-1610 / KT).